Here is a 412-residue protein sequence, read N- to C-terminus: Angiopoietin-related protein 4 (412 aa).

The N-terminal stretch at 1-23 is a signal peptide; sequence MRSAPTARAALVLCAATAGLLSA. The stretch at 106–153 forms a coiled coil; it reads ETLHSLQTQLKAQNSKIQQLFQKVAQQQRHLEKQHLRIQNLQGQLDHL. An N-linked (GlcNAc...) asparagine glycan is attached at N183. Residues 185–407 enclose the Fibrinogen C-terminal domain; it reads SRLHRLPRDC…ATTMLIQPTV (223 aa). Disulfide bonds link C194–C222 and C347–C360.

In terms of assembly, homooligomer; disulfide-linked via Cys residues in the N-terminal part of the protein. The homooligomer undergoes proteolytic processing to release the ANGPTL4 C-terminal chain, which circulates as a monomer. The homooligomer unprocessed form is able to interact with the extracellular matrix. Post-translationally, N-glycosylated. In terms of processing, forms disulfide-linked dimers and tetramers. Cleaved into a smaller N-terminal chain and a larger chain that contains the fibrinogen C-terminal domain; both cleaved and uncleaved forms are detected in the extracellular space. The cleaved form is not present within the cell.

The protein localises to the secreted. The protein resides in the extracellular space. It localises to the extracellular matrix. Mediates inactivation of the lipoprotein lipase LPL, and thereby plays a role in the regulation of triglyceride clearance from the blood serum and in lipid metabolism. May also play a role in regulating glucose homeostasis and insulin sensitivity. Inhibits proliferation, migration, and tubule formation of endothelial cells and reduces vascular leakage. Upon heterologous expression, inhibits the adhesion of endothelial cell to the extracellular matrix (ECM), and inhibits the reorganization of the actin cytoskeleton, formation of actin stress fibers and focal adhesions in endothelial cells that have adhered to ANGPTL4-containing ECM (in vitro). Depending on context, may modulate tumor-related angiogenesis. Its function is as follows. Mediates inactivation of the lipoprotein lipase LPL, and thereby plays an important role in the regulation of triglyceride clearance from the blood serum and in lipid metabolism. Has higher activity in LPL inactivation than the uncleaved protein. The polypeptide is Angiopoietin-related protein 4 (ANGPTL4) (Sus scrofa (Pig)).